The chain runs to 309 residues: 4-hydroxy-3-methylbut-2-enyl diphosphate reductase (309 aa).

Cys-13 is a binding site for [4Fe-4S] cluster. (2E)-4-hydroxy-3-methylbut-2-enyl diphosphate is bound by residues His-42 and His-75. Dimethylallyl diphosphate is bound by residues His-42 and His-75. The isopentenyl diphosphate site is built by His-42 and His-75. Cys-97 serves as a coordination point for [4Fe-4S] cluster. His-125 serves as a coordination point for (2E)-4-hydroxy-3-methylbut-2-enyl diphosphate. His-125 serves as a coordination point for dimethylallyl diphosphate. Residue His-125 participates in isopentenyl diphosphate binding. The Proton donor role is filled by Glu-127. Thr-165 is a binding site for (2E)-4-hydroxy-3-methylbut-2-enyl diphosphate. Residue Cys-195 coordinates [4Fe-4S] cluster. (2E)-4-hydroxy-3-methylbut-2-enyl diphosphate-binding residues include Ser-223, Ser-224, Asn-225, and Ser-267. Positions 223, 224, 225, and 267 each coordinate dimethylallyl diphosphate. 4 residues coordinate isopentenyl diphosphate: Ser-223, Ser-224, Asn-225, and Ser-267.

Belongs to the IspH family. The cofactor is [4Fe-4S] cluster.

It catalyses the reaction isopentenyl diphosphate + 2 oxidized [2Fe-2S]-[ferredoxin] + H2O = (2E)-4-hydroxy-3-methylbut-2-enyl diphosphate + 2 reduced [2Fe-2S]-[ferredoxin] + 2 H(+). The catalysed reaction is dimethylallyl diphosphate + 2 oxidized [2Fe-2S]-[ferredoxin] + H2O = (2E)-4-hydroxy-3-methylbut-2-enyl diphosphate + 2 reduced [2Fe-2S]-[ferredoxin] + 2 H(+). Its pathway is isoprenoid biosynthesis; dimethylallyl diphosphate biosynthesis; dimethylallyl diphosphate from (2E)-4-hydroxy-3-methylbutenyl diphosphate: step 1/1. The protein operates within isoprenoid biosynthesis; isopentenyl diphosphate biosynthesis via DXP pathway; isopentenyl diphosphate from 1-deoxy-D-xylulose 5-phosphate: step 6/6. Its function is as follows. Catalyzes the conversion of 1-hydroxy-2-methyl-2-(E)-butenyl 4-diphosphate (HMBPP) into a mixture of isopentenyl diphosphate (IPP) and dimethylallyl diphosphate (DMAPP). Acts in the terminal step of the DOXP/MEP pathway for isoprenoid precursor biosynthesis. The protein is 4-hydroxy-3-methylbut-2-enyl diphosphate reductase of Chlamydia abortus (strain DSM 27085 / S26/3) (Chlamydophila abortus).